Consider the following 268-residue polypeptide: Undecaprenyl-diphosphatase (268 aa).

A run of 7 helical transmembrane segments spans residues 47-67 (FTVL…FAKL), 83-103 (FVIG…IAGK), 109-129 (LFNP…LMWV), 144-164 (FPLP…IPGV), 184-204 (AAEF…AYDF), 218-238 (TVAI…KAFL), and 246-266 (FTFF…ALAL).

This sequence belongs to the UppP family.

The protein localises to the cell inner membrane. It catalyses the reaction di-trans,octa-cis-undecaprenyl diphosphate + H2O = di-trans,octa-cis-undecaprenyl phosphate + phosphate + H(+). Functionally, catalyzes the dephosphorylation of undecaprenyl diphosphate (UPP). Confers resistance to bacitracin. This Nitrobacter winogradskyi (strain ATCC 25391 / DSM 10237 / CIP 104748 / NCIMB 11846 / Nb-255) protein is Undecaprenyl-diphosphatase.